Reading from the N-terminus, the 201-residue chain is MNHAEGMNSHQYYDKHFQITAVKVFPGEFHATNQSRLLVTLLGSCVAVCLSDRISGVAGMNHFLLPEGSLDLGAGTSAARFGVNAMELLITDMQKLGAMRNRLEAKIFGAGNVLDGMTVVKVGERNTNFIRSYLANEQIPILAEDLLGECARKVYFFTATGKVLIKKLKKSGAAIKQEQPYRGRIVDQGEGAKTGDIDLFI.

It belongs to the CheD family.

It carries out the reaction L-glutaminyl-[protein] + H2O = L-glutamyl-[protein] + NH4(+). In terms of biological role, probably deamidates glutamine residues to glutamate on methyl-accepting chemotaxis receptors (MCPs), playing an important role in chemotaxis. This is Probable chemoreceptor glutamine deamidase CheD 2 from Chromobacterium violaceum (strain ATCC 12472 / DSM 30191 / JCM 1249 / CCUG 213 / NBRC 12614 / NCIMB 9131 / NCTC 9757 / MK).